Reading from the N-terminus, the 406-residue chain is Argininosuccinate synthase (406 aa).

Residues 14 to 22 (AYSGGLDTS) and Ala-41 each bind ATP. Tyr-92 and Ser-97 together coordinate L-citrulline. An ATP-binding site is contributed by Gly-122. Positions 124, 128, and 129 each coordinate L-aspartate. Asn-128 lines the L-citrulline pocket. 5 residues coordinate L-citrulline: Arg-132, Ser-181, Ser-190, Glu-266, and Tyr-278.

It belongs to the argininosuccinate synthase family. Type 1 subfamily. Homotetramer.

The protein localises to the cytoplasm. The catalysed reaction is L-citrulline + L-aspartate + ATP = 2-(N(omega)-L-arginino)succinate + AMP + diphosphate + H(+). Its pathway is amino-acid biosynthesis; L-arginine biosynthesis; L-arginine from L-ornithine and carbamoyl phosphate: step 2/3. The sequence is that of Argininosuccinate synthase from Geobacter sulfurreducens (strain ATCC 51573 / DSM 12127 / PCA).